The chain runs to 261 residues: Imidazole glycerol phosphate synthase subunit HisF (261 aa).

Active-site residues include aspartate 16 and aspartate 135.

This sequence belongs to the HisA/HisF family. In terms of assembly, heterodimer of HisH and HisF.

Its subcellular location is the cytoplasm. It carries out the reaction 5-[(5-phospho-1-deoxy-D-ribulos-1-ylimino)methylamino]-1-(5-phospho-beta-D-ribosyl)imidazole-4-carboxamide + L-glutamine = D-erythro-1-(imidazol-4-yl)glycerol 3-phosphate + 5-amino-1-(5-phospho-beta-D-ribosyl)imidazole-4-carboxamide + L-glutamate + H(+). The protein operates within amino-acid biosynthesis; L-histidine biosynthesis; L-histidine from 5-phospho-alpha-D-ribose 1-diphosphate: step 5/9. Its function is as follows. IGPS catalyzes the conversion of PRFAR and glutamine to IGP, AICAR and glutamate. The HisF subunit catalyzes the cyclization activity that produces IGP and AICAR from PRFAR using the ammonia provided by the HisH subunit. In Mycolicibacterium gilvum (strain PYR-GCK) (Mycobacterium gilvum (strain PYR-GCK)), this protein is Imidazole glycerol phosphate synthase subunit HisF.